A 278-amino-acid polypeptide reads, in one-letter code: Type II restriction enzyme NgoPII (278 aa).

This sequence belongs to the NgoPII type II restriction endonuclease family.

The enzyme catalyses Endonucleolytic cleavage of DNA to give specific double-stranded fragments with terminal 5'-phosphates.. In terms of biological role, a P subtype restriction enzyme that recognizes the double-stranded sequence 5'-GGCC-3' and cleaves after G-2. The chain is Type II restriction enzyme NgoPII (ngoPIIR) from Neisseria gonorrhoeae.